The primary structure comprises 350 residues: L-serine dehydratase (350 aa).

Lysine 62 carries the post-translational modification N6-(pyridoxal phosphate)lysine.

This sequence belongs to the serine/threonine dehydratase family. Pyridoxal 5'-phosphate serves as cofactor.

The protein resides in the cytoplasm. The catalysed reaction is L-serine = pyruvate + NH4(+). Its pathway is carbohydrate biosynthesis; gluconeogenesis. The chain is L-serine dehydratase (sds) from Dictyostelium discoideum (Social amoeba).